A 267-amino-acid chain; its full sequence is Cilia- and flagella-associated protein 300 (267 aa).

The protein belongs to the CFAP300 family. In terms of assembly, interacts with DNAAF2. As to expression, expressed in the left-right organiser (LRO) node at 8.25 dpc.

The protein resides in the cytoplasm. It localises to the cytoskeleton. The protein localises to the cilium axoneme. In terms of biological role, cilium- and flagellum-specific protein that plays a role in axonemal structure organization and motility. May play a role in outer and inner dynein arm assembly. The protein is Cilia- and flagella-associated protein 300 of Mus musculus (Mouse).